Here is a 428-residue protein sequence, read N- to C-terminus: Histone deacetylase 3 (428 aa).

Residues 3-316 (KTVAYFYDPD…WTYETSLLVE (314 aa)) form a histone deacetylase region. 1D-myo-inositol 1,4,5,6-tetrakisphosphate contacts are provided by His-17, Gly-21, and Lys-25. Residue His-135 is part of the active site. Residues Asp-170, His-172, and Asp-259 each coordinate Zn(2+). Arg-265 is a binding site for 1D-myo-inositol 1,4,5,6-tetrakisphosphate. Basic and acidic residues-rich tracts occupy residues 388-405 (DRTD…ENYS) and 415-428 (DGDH…DVEI). Residues 388–428 (DRTDEADAEERGPEENYSRPEAPNEFYDGDHDNDKESDVEI) form a disordered region. Ser-424 is modified (phosphoserine).

It belongs to the histone deacetylase family. HD type 1 subfamily. Interacts with HDAC7 and HDAC9. Interacts with HDAC10, DAXX and DACH1. Found in a complex with NCOR1 and NCOR2. Component of the N-Cor repressor complex, at least composed of NCOR1, NCOR2, HDAC3, TBL1X, TBL1R, CORO2A and GPS2. Interacts with BCOR, MJD2A/JHDM3A, NRIP1, PRDM6 and SRY. Interacts with BTBD14B. Interacts with GLIS2. Interacts (via the DNA-binding domain) with NR2C1; the interaction recruits phosphorylated NR2C1 to PML bodies for sumoylation. Component of the Notch corepressor complex. Interacts with CBFA2T3 and NKAP. Interacts with APEX1; the interaction is not dependent on the acetylated status of APEX1. Interacts with and deacetylates MAPK14. Interacts with ZMYND15. Interacts with SMRT/NCOR2 and BCL6 on DNA enhancer elements. Interacts with INSM1. Interacts with XBP1; the interaction occurs in endothelial cell (EC) under disturbed flow. Interacts (via C-terminus) with CCAR2 (via N-terminus). Interacts with and deacetylates MEF2D. Interacts with BEND3. Interacts with NKAPL. Interacts with DHX36; this interaction occurs in a RNA-dependent manner. Interacts weakly with CRY1; this interaction is enhanced in the presence of FBXL3. Interacts with FBXL3 and BMAL1. Interacts with NCOR1. Interacts with RARA. Interacts with SETD5. In terms of processing, deubiquitinated on 'Lys-63'-linked ubiquitin chains by USP38; leading to a decreased level of histone acetylation. Sumoylated in vitro.

It localises to the nucleus. The protein resides in the chromosome. The protein localises to the cytoplasm. It is found in the cytosol. The enzyme catalyses N(6)-acetyl-L-lysyl-[histone] + H2O = L-lysyl-[histone] + acetate. The catalysed reaction is N(6)-acetyl-L-lysyl-[protein] + H2O = L-lysyl-[protein] + acetate. It catalyses the reaction N(6)-(2E)-butenoyl-L-lysyl-[protein] + H2O = (2E)-2-butenoate + L-lysyl-[protein]. It carries out the reaction N(6)-(2-hydroxyisobutanoyl)-L-lysyl-[protein] + H2O = 2-hydroxy-2-methylpropanoate + L-lysyl-[protein]. The enzyme catalyses N(6)-[(S)-lactoyl]-L-lysyl-[protein] + H2O = (S)-lactate + L-lysyl-[protein]. With respect to regulation, inositol tetraphosphate (1D-myo-inositol 1,4,5,6-tetrakisphosphate) promotes the histone deacetylase activity by acting as an intermolecular glue between HDAC3 and NCOR2, thereby promoting its association with the N-Cor complex, a prerequisite for the histone deacetylase activity. Functionally, histone deacetylase that catalyzes the deacetylation of lysine residues on the N-terminal part of the core histones (H2A, H2B, H3 and H4), and some other non-histone substrates. Histone deacetylation gives a tag for epigenetic repression and plays an important role in transcriptional regulation, cell cycle progression and developmental events. Histone deacetylases act via the formation of large multiprotein complexes, such as N-Cor repressor complex, which activate the histone deacetylase activity. Participates in the BCL6 transcriptional repressor activity by deacetylating the H3 'Lys-27' (H3K27) on enhancer elements, antagonizing EP300 acetyltransferase activity and repressing proximal gene expression. Acts as a molecular chaperone for shuttling phosphorylated NR2C1 to PML bodies for sumoylation. Contributes, together with XBP1 isoform 1, to the activation of NFE2L2-mediated HMOX1 transcription factor gene expression in a PI(3)K/mTORC2/Akt-dependent signaling pathway leading to endothelial cell (EC) survival under disturbed flow/oxidative stress. Regulates both the transcriptional activation and repression phases of the circadian clock in a deacetylase activity-independent manner. During the activation phase, promotes the accumulation of ubiquitinated BMAL1 at the E-boxes and during the repression phase, blocks FBXL3-mediated CRY1/2 ubiquitination and promotes the interaction of CRY1 and BMAL1. The NCOR1-HDAC3 complex regulates the circadian expression of the core clock gene BMAL1 and the genes involved in lipid metabolism in the liver. Also functions as a deacetylase for non-histone targets, such as KAT5, MEF2D, MAPK14, RARA and STAT3. Serves as a corepressor of RARA, mediating its deacetylation and repression, leading to inhibition of RARE DNA element binding. In association with RARA, plays a role in the repression of microRNA-10a and thereby in the inflammatory response. In addition to protein deacetylase activity, also acts as a protein-lysine deacylase by recognizing other acyl groups: catalyzes removal of (2E)-butenoyl (crotonyl), lactoyl (lactyl) and 2-hydroxyisobutanoyl (2-hydroxyisobutyryl) acyl groups from lysine residues, leading to protein decrotonylation, delactylation and de-2-hydroxyisobutyrylation, respectively. Catalyzes decrotonylation of MAPRE1/EB1. Mediates delactylation NBN/NBS1, thereby inhibiting DNA double-strand breaks (DSBs) via homologous recombination (HR). This chain is Histone deacetylase 3 (HDAC3), found in Pongo abelii (Sumatran orangutan).